A 125-amino-acid chain; its full sequence is Large ribosomal subunit protein bL12 (125 aa).

The protein belongs to the bacterial ribosomal protein bL12 family. Homodimer. Part of the ribosomal stalk of the 50S ribosomal subunit. Forms a multimeric L10(L12)X complex, where L10 forms an elongated spine to which 2 to 4 L12 dimers bind in a sequential fashion. Binds GTP-bound translation factors.

Functionally, forms part of the ribosomal stalk which helps the ribosome interact with GTP-bound translation factors. Is thus essential for accurate translation. This chain is Large ribosomal subunit protein bL12, found in Dictyoglomus thermophilum (strain ATCC 35947 / DSM 3960 / H-6-12).